The primary structure comprises 299 residues: Recombination-associated protein RdgC (299 aa).

The protein belongs to the RdgC family.

The protein localises to the cytoplasm. It localises to the nucleoid. Functionally, may be involved in recombination. This Laribacter hongkongensis (strain HLHK9) protein is Recombination-associated protein RdgC.